Reading from the N-terminus, the 264-residue chain is S-adenosylmethionine decarboxylase proenzyme (264 aa).

Ser-111 serves as the catalytic Schiff-base intermediate with substrate; via pyruvic acid. Ser-111 bears the Pyruvic acid (Ser); by autocatalysis mark. His-116 functions as the Proton acceptor; for processing activity in the catalytic mechanism. The active-site Proton donor; for catalytic activity is Cys-139.

Belongs to the prokaryotic AdoMetDC family. Type 2 subfamily. As to quaternary structure, heterooctamer of four alpha and four beta chains arranged as a tetramer of alpha/beta heterodimers. It depends on pyruvate as a cofactor. In terms of processing, is synthesized initially as an inactive proenzyme. Formation of the active enzyme involves a self-maturation process in which the active site pyruvoyl group is generated from an internal serine residue via an autocatalytic post-translational modification. Two non-identical subunits are generated from the proenzyme in this reaction, and the pyruvate is formed at the N-terminus of the alpha chain, which is derived from the carboxyl end of the proenzyme. The post-translation cleavage follows an unusual pathway, termed non-hydrolytic serinolysis, in which the side chain hydroxyl group of the serine supplies its oxygen atom to form the C-terminus of the beta chain, while the remainder of the serine residue undergoes an oxidative deamination to produce ammonia and the pyruvoyl group blocking the N-terminus of the alpha chain.

It carries out the reaction S-adenosyl-L-methionine + H(+) = S-adenosyl 3-(methylsulfanyl)propylamine + CO2. It functions in the pathway amine and polyamine biosynthesis; S-adenosylmethioninamine biosynthesis; S-adenosylmethioninamine from S-adenosyl-L-methionine: step 1/1. Its function is as follows. Catalyzes the decarboxylation of S-adenosylmethionine to S-adenosylmethioninamine (dcAdoMet), the propylamine donor required for the synthesis of the polyamines spermine and spermidine from the diamine putrescine. The polypeptide is S-adenosylmethionine decarboxylase proenzyme (Geobacillus kaustophilus (strain HTA426)).